The primary structure comprises 601 residues: Abscisic acid cluster transcription factor abl7 (601 aa).

A DNA-binding region (zn(2)-C6 fungal-type) is located at residues 13 to 40; sequence CDECRRRKLKCDRVRPQCGTCALSESEC.

Its subcellular location is the nucleus. Transcription factor that regulates the expression of the gene cluster that mediates the biosynthesis of abscisic acid (ABA), a phytohormone that acts antagonistically toward salicylic acid (SA), jasmonic acid (JA) and ethylene (ETH) signaling, to impede plant defense responses. This Leptosphaeria maculans (strain JN3 / isolate v23.1.3 / race Av1-4-5-6-7-8) (Blackleg fungus) protein is Abscisic acid cluster transcription factor abl7.